The following is a 22-amino-acid chain: Superoxide dismutase [Cu-Zn] (22 aa).

This sequence belongs to the Cu-Zn superoxide dismutase family. Homodimer. Requires Cu cation as cofactor. Zn(2+) serves as cofactor.

It is found in the cytoplasm. It catalyses the reaction 2 superoxide + 2 H(+) = H2O2 + O2. In terms of biological role, destroys radicals which are normally produced within the cells and which are toxic to biological systems. This Hordeum vulgare (Barley) protein is Superoxide dismutase [Cu-Zn].